The chain runs to 421 residues: Calreticulin (421 aa).

The signal sequence occupies residues 1–22 (MAFRVPNSSLLSLILLSLLAIA). Residue Asn-56 is glycosylated (N-linked (GlcNAc...) asparagine). The cysteines at positions 110 and 142 are disulfide-linked. 4 residues coordinate an alpha-D-glucoside: Tyr-114, Lys-116, Tyr-133, and Asp-140. Asn-156 carries an N-linked (GlcNAc...) asparagine glycan. A run of 7 repeats spans residues 196–207 (KQTGSLYSDWDL), 215–226 (DPEAKKPEDWED), 232–243 (DPEDKKPEGYDD), 250–261 (DPDAKKPEDWDD), 265–275 (GEWTAPTIPNP), 279–289 (GEWKPKKIKNP), and 293–303 (GKWKAPLIDNP). The tract at residues 196-261 (KQTGSLYSDW…DAKKPEDWDD (66 aa)) is 4 X approximate repeats. The disordered stretch occupies residues 217–283 (EAKKPEDWED…NPEYKGEWKP (67 aa)). Acidic residues predominate over residues 223–232 (DWEDQEYIPD). Residues 233 to 257 (PEDKKPEGYDDIPKEITDPDAKKPE) show a composition bias toward basic and acidic residues. A 3 X approximate repeats region spans residues 265–303 (GEWTAPTIPNPEYKGEWKPKKIKNPNFKGKWKAPLIDNP). Residue Glu-323 coordinates an alpha-D-glucoside. The segment covering 350–380 (EETWGKQKDAEKAAFEELEKKLQEEESKEDP) has biased composition (basic and acidic residues). A disordered region spans residues 350-421 (EETWGKQKDA…ETEAEKHDEL (72 aa)). Over residues 381 to 399 (VDSDAEDDDNEAEDGEESD) the composition is skewed to acidic residues. A Prevents secretion from ER motif is present at residues 418–421 (HDEL).

It belongs to the calreticulin family.

Its subcellular location is the endoplasmic reticulum lumen. Molecular calcium-binding chaperone promoting folding, oligomeric assembly and quality control in the ER via the calreticulin/calnexin cycle. This lectin may interact transiently with almost all of the monoglucosylated glycoproteins that are synthesized in the ER. In Prunus armeniaca (Apricot), this protein is Calreticulin.